The following is a 239-amino-acid chain: MGKSLIQQRRGKGSPTFRSPSHRFRGAVKYIPLNYTQDKTIRGVVEEIMHDPGRTAPVARVKFENGMEKLIIAPEGLLVGQEIYIGPDAPVEIGNTLPLAKIPEGTYIYNIEGVPGDGGKYVRAGGTYALVVSREKDKVIVQLPSGELKAFDPNCRATIGVVAGGGRLEKPLVKAGKAYYKYKARNKFWPTPRGVKMNAVNHPFGGKEHHPGKPTTTSRRAPPGRKVGHIAARRTGRRK.

Disordered regions lie at residues 1–20 (MGKSLIQQRRGKGSPTFRSP) and 203–239 (PFGGKEHHPGKPTTTSRRAPPGRKVGHIAARRTGRRK). The span at 222 to 239 (PPGRKVGHIAARRTGRRK) shows a compositional bias: basic residues.

This sequence belongs to the universal ribosomal protein uL2 family. As to quaternary structure, part of the 50S ribosomal subunit. Forms a bridge to the 30S subunit in the 70S ribosome.

In terms of biological role, one of the primary rRNA binding proteins. Required for association of the 30S and 50S subunits to form the 70S ribosome, for tRNA binding and peptide bond formation. It has been suggested to have peptidyltransferase activity; this is somewhat controversial. Makes several contacts with the 16S rRNA in the 70S ribosome. This chain is Large ribosomal subunit protein uL2, found in Pyrococcus horikoshii (strain ATCC 700860 / DSM 12428 / JCM 9974 / NBRC 100139 / OT-3).